The chain runs to 1015 residues: Protein HIRA (1015 aa).

WD repeat units lie at residues 11 to 53 (HNGK…QEDD) and 68 to 107 (NHLA…GPST). Position 111 is a phosphoserine (S111). 5 WD repeats span residues 129–168 (SHSG…EILA), 172–211 (GHSG…LETS), 220–263 (GGTT…TNMD), 266–322 (GHRK…PLVV), and 326–367 (LFDK…DPLS). Residues 408 to 431 (QQQQQLDQKNATTRETSSASSVTG) form a disordered region. Residues 413-431 (LDQKNATTRETSSASSVTG) are compositionally biased toward polar residues. Residues 421–479 (RETSSASSVTGVVNGESLEDIRKNLLKKQVETRTADGRRRITPLCIAQLDTGDFSTAFF) are interaction with ASF1A. Residues 421-727 (RETSSASSVT…RLKCNREGKE (307 aa)) form an interaction with CCNA1 region. Positions 439–475 (EDIRKNLLKKQVETRTADGRRRITPLCIAQLDTGDFS) are required for repression of histone gene transcription. Composition is skewed to low complexity over residues 494–507 (SSPS…LDSS) and 540–556 (ATST…TTPS). Residues 494–558 (SSPSGQQLLP…PSVLTTPSKI (65 aa)) form a disordered region. The residue at position 548 (S548) is a Phosphoserine. Residue T554 is modified to Phosphothreonine. S556 is subject to Phosphoserine. A Phosphothreonine modification is found at T575. Phosphoserine occurs at positions 583, 608, 609, 610, 612, 659, and 673. Interaction with PAX3 regions lie at residues 593–737 (KEQN…SRVL) and 738–826 (TAAG…SQIL). The interaction with histone H2B stretch occupies residues 594–824 (EQNLVKELRS…LSGSDMTVSQ (231 aa)). The segment covering 603–617 (SRELESSSDSDEKVH) has biased composition (basic and acidic residues). A disordered region spans residues 603-623 (SRELESSSDSDEKVHLAKPSS). The interval 736–1015 (VLTAAGSCDV…QEQLDILRDK (280 aa)) is interaction with histone H4.

The protein belongs to the WD repeat HIR1 family. In terms of assembly, interacts with CCNA1, HIRIP3 and NFU1/HIRIP5. Part of a complex which includes ASF1A, CABIN1, histone H3.3, histone H4 and UBN1. Interacts with histone H2B, histone H3-3B, PAX3 and PAX7. Post-translationally, sumoylated. Phosphorylated by CDK2/CCNA1 and CDK2/CCNE1 on Thr-554 in vitro. Also phosphorylated on Thr-554 in vivo. As to expression, expressed in cerebrum, cerebellum, heart, kidney, liver, lung and spleen.

It is found in the nucleus. The protein localises to the PML body. Its function is as follows. Required for the periodic repression of histone gene transcription during the cell cycle. Cooperates with ASF1A to promote replication-independent chromatin assembly. Required for the formation of senescence-associated heterochromatin foci (SAHF) and efficient senescence-associated cell cycle exit. This chain is Protein HIRA (Hira), found in Mus musculus (Mouse).